A 271-amino-acid polypeptide reads, in one-letter code: Tryptophan synthase alpha chain (271 aa).

Catalysis depends on proton acceptor residues E49 and D60.

This sequence belongs to the TrpA family. Tetramer of two alpha and two beta chains.

The enzyme catalyses (1S,2R)-1-C-(indol-3-yl)glycerol 3-phosphate + L-serine = D-glyceraldehyde 3-phosphate + L-tryptophan + H2O. It functions in the pathway amino-acid biosynthesis; L-tryptophan biosynthesis; L-tryptophan from chorismate: step 5/5. The alpha subunit is responsible for the aldol cleavage of indoleglycerol phosphate to indole and glyceraldehyde 3-phosphate. The polypeptide is Tryptophan synthase alpha chain (Burkholderia cenocepacia (strain ATCC BAA-245 / DSM 16553 / LMG 16656 / NCTC 13227 / J2315 / CF5610) (Burkholderia cepacia (strain J2315))).